Consider the following 122-residue polypeptide: Large ribosomal subunit protein uL14 (122 aa).

The protein belongs to the universal ribosomal protein uL14 family. In terms of assembly, part of the 50S ribosomal subunit. Forms a cluster with proteins L3 and L19. In the 70S ribosome, L14 and L19 interact and together make contacts with the 16S rRNA in bridges B5 and B8.

Binds to 23S rRNA. Forms part of two intersubunit bridges in the 70S ribosome. The chain is Large ribosomal subunit protein uL14 from Jannaschia sp. (strain CCS1).